The chain runs to 399 residues: Probable 2-isopropylmalate synthase (399 aa).

In terms of domain architecture, Pyruvate carboxyltransferase spans 20 to 272; the sequence is VRIFDTTLRD…RTGVNTKLLY (253 aa). A divalent metal cation contacts are provided by aspartate 29, histidine 210, histidine 212, and asparagine 246.

This sequence belongs to the alpha-IPM synthase/homocitrate synthase family. In terms of assembly, homodimer. The cofactor is a divalent metal cation.

The enzyme catalyses 3-methyl-2-oxobutanoate + acetyl-CoA + H2O = (2S)-2-isopropylmalate + CoA + H(+). It participates in amino-acid biosynthesis; L-leucine biosynthesis; L-leucine from 3-methyl-2-oxobutanoate: step 1/4. Its function is as follows. Catalyzes the condensation of the acetyl group of acetyl-CoA with 3-methyl-2-oxobutanoate (2-oxoisovalerate) to form 3-carboxy-3-hydroxy-4-methylpentanoate (2-isopropylmalate). The sequence is that of Probable 2-isopropylmalate synthase (leuA) from Ignicoccus hospitalis (strain KIN4/I / DSM 18386 / JCM 14125).